The primary structure comprises 362 residues: Hepatic sodium/bile acid cotransporter (362 aa).

Over 1 to 22 (MEVHNVSAPFNFSLPPGFGHRA) the chain is Extracellular. 2 N-linked (GlcNAc...) asparagine glycosylation sites follow: Asn-5 and Asn-11. The chain crosses the membrane as a helical span at residues 23 to 44 (TDKALSIILVLMLLLIMLSLGC). The Cytoplasmic portion of the chain corresponds to 45–47 (TME). Residues 48 to 83 (FSKIKAHLWKPKGVIVALVAQFGIMPLAAFLLGKIF) traverse the membrane as a helical segment. The Extracellular portion of the chain corresponds to 84–86 (HLS). The chain crosses the membrane as a discontinuously helical span at residues 87-112 (NIEALAILICGCSPGGNLSNLFTLAM). Residues 113–115 (KGD) lie on the Cytoplasmic side of the membrane. Residues 116–142 (MNLSIVMTTCSSFSALGMMPLLLYVYS) form a helical membrane-spanning segment. The Extracellular portion of the chain corresponds to 143–156 (KGIYDGDLKDKVPY). A helical membrane pass occupies residues 157–179 (KGIMISLVIVLIPCTIGIVLKSK). The Cytoplasmic segment spans residues 180–183 (RPHY). Residues 184-217 (VPYILKGGMIITFLLSVAVTALSVINVGNSIMFV) form a helical membrane-spanning segment. Topologically, residues 218–219 (MT) are extracellular. The helical transmembrane segment at 220–243 (PHLLATSSLMPFSGFLMGYILSAL) threads the bilayer. Residues 244 to 247 (FQLN) lie on the Cytoplasmic side of the membrane. The chain crosses the membrane as a discontinuously helical span at residues 248–273 (PSCRRTISMETGFQNIQLCSTILNVT). The Extracellular segment spans residues 274–280 (FPPEVIG). Residues 281-311 (PLFFFPLLYMIFQLAEGLLIIIIFRCYEKIK) form a helical membrane-spanning segment. The Cytoplasmic portion of the chain corresponds to 312–362 (PPKDQTKITYKAAATEDATPAALEKGTHNGNIPPLQPGPSPNGLNSGQMAN). A Phosphothreonine modification is found at Thr-330. The interval 333–362 (ALEKGTHNGNIPPLQPGPSPNGLNSGQMAN) is disordered. Residues 353–362 (NGLNSGQMAN) show a composition bias toward polar residues.

It belongs to the bile acid:sodium symporter (BASS) (TC 2.A.28) family. In terms of tissue distribution, highly expressed in liver and low expression in kidney.

The protein localises to the cell membrane. The catalysed reaction is taurocholate(out) + 2 Na(+)(out) = taurocholate(in) + 2 Na(+)(in). The enzyme catalyses taurochenodeoxycholate(out) + 2 Na(+)(out) = taurochenodeoxycholate(in) + 2 Na(+)(in). It catalyses the reaction tauroursodeoxycholate(out) + 2 Na(+)(out) = tauroursodeoxycholate(in) + 2 Na(+)(in). It carries out the reaction glycocholate(out) + 2 Na(+)(out) = glycocholate(in) + 2 Na(+)(in). The catalysed reaction is estrone 3-sulfate(out) + 2 Na(+)(out) = estrone 3-sulfate(in) + 2 Na(+)(in). The enzyme catalyses cholate(out) + 2 Na(+)(out) = cholate(in) + 2 Na(+)(in). It catalyses the reaction tauronorcholate(out) + 2 Na(+)(out) = tauronorcholate(in) + 2 Na(+)(in). It carries out the reaction taurodeoxycholate(out) + 2 Na(+)(out) = taurodeoxycholate(in) + 2 Na(+)(in). The catalysed reaction is tauroallocholate(out) + 2 Na(+)(out) = tauroallocholate(in) + 2 Na(+)(in). The enzyme catalyses taurohyodeoxycholate(out) + 2 Na(+)(out) = taurohyodeoxycholate(in) + 2 Na(+)(in). It catalyses the reaction taurohyocholate(out) + 2 Na(+)(out) = taurohyocholate(in) + 2 Na(+)(in). It carries out the reaction tauro-beta-muricholate(out) + 2 Na(+)(out) = tauro-beta-muricholate(in) + 2 Na(+)(in). The transport of bile acids is sodium-dependent. Functionally, as a major transporter of conjugated bile salts from plasma into the hepatocyte, it plays a key role in the enterohepatic circulation of bile salts necessary for the solubilization and absorption of dietary fat and fat-soluble vitamins. It is strictly dependent on the extracellular presence of sodium. It exhibits broad substrate specificity and transports various bile acids, such as taurocholate, cholate, as well as non-bile acid organic compounds, such as estrone sulfate. Works collaboratively with the ileal transporter (NTCP2), the organic solute transporter (OST), and the bile salt export pump (BSEP), to ensure efficacious biological recycling of bile acids during enterohepatic circulation. The protein is Hepatic sodium/bile acid cotransporter (Slc10a1) of Rattus norvegicus (Rat).